The following is a 119-amino-acid chain: UPF0145 protein Ta0182 (119 aa).

This sequence belongs to the UPF0145 family.

The protein is UPF0145 protein Ta0182 of Thermoplasma acidophilum (strain ATCC 25905 / DSM 1728 / JCM 9062 / NBRC 15155 / AMRC-C165).